A 223-amino-acid chain; its full sequence is Deoxyribose-phosphate aldolase (223 aa).

Residue Asp91 is the Proton donor/acceptor of the active site. Lys153 serves as the catalytic Schiff-base intermediate with acetaldehyde. The active-site Proton donor/acceptor is Lys182.

It belongs to the DeoC/FbaB aldolase family. DeoC type 1 subfamily.

It localises to the cytoplasm. The catalysed reaction is 2-deoxy-D-ribose 5-phosphate = D-glyceraldehyde 3-phosphate + acetaldehyde. It participates in carbohydrate degradation; 2-deoxy-D-ribose 1-phosphate degradation; D-glyceraldehyde 3-phosphate and acetaldehyde from 2-deoxy-alpha-D-ribose 1-phosphate: step 2/2. In terms of biological role, catalyzes a reversible aldol reaction between acetaldehyde and D-glyceraldehyde 3-phosphate to generate 2-deoxy-D-ribose 5-phosphate. The sequence is that of Deoxyribose-phosphate aldolase from Yersinia enterocolitica serotype O:8 / biotype 1B (strain NCTC 13174 / 8081).